The chain runs to 732 residues: Integrator complex subunit 13 (732 aa).

Residues 564–648 (PPEEEERKKR…DETPHMEKSK (85 aa)) show a composition bias toward basic and acidic residues. Residues 564–650 (PPEEEERKKR…TPHMEKSKGP (87 aa)) are disordered. The Nuclear localization signal (NLS) motif lies at 572-582 (KRGRKREDRED). Lys611 participates in a covalent cross-link: Glycyl lysine isopeptide (Lys-Gly) (interchain with G-Cter in SUMO2). Phosphoserine occurs at positions 623, 626, and 678. The tract at residues 649 to 694 (GPVSLLSLWSNRINTANSRKHQEFAGRLNSVNNRAELYQHLKEENG) is cleavage module binding motif (CMBM).

Belongs to the Integrator subunit 13 family. Component of the Integrator complex, composed of core subunits INTS1, INTS2, INTS3, INTS4, INTS5, INTS6, INTS7, INTS8, INTS9/RC74, INTS10, INTS11/CPSF3L, INTS12, INTS13, INTS14 and INTS15. The core complex associates with protein phosphatase 2A subunits PPP2CA and PPP2R1A, to form the Integrator-PP2A (INTAC) complex. INTS13 is part of the tail subcomplex, composed of INTS10, INTS13, INTS14 and INTS15. Interacts with transcription factors ZNF609 and ZNF655. Interacts with PAFAH1B1; this interaction may be required for proper recruitment of dynein complexes to the nuclear envelope at prophase.

The protein localises to the nucleus. It is found in the cytoplasm. Component of the integrator complex, a multiprotein complex that terminates RNA polymerase II (Pol II) transcription in the promoter-proximal region of genes. The integrator complex provides a quality checkpoint during transcription elongation by driving premature transcription termination of transcripts that are unfavorably configured for transcriptional elongation: the complex terminates transcription by (1) catalyzing dephosphorylation of the C-terminal domain (CTD) of Pol II subunit POLR2A/RPB1 and SUPT5H/SPT5, (2) degrading the exiting nascent RNA transcript via endonuclease activity and (3) promoting the release of Pol II from bound DNA. The integrator complex is also involved in terminating the synthesis of non-coding Pol II transcripts, such as enhancer RNAs (eRNAs), small nuclear RNAs (snRNAs), telomerase RNAs and long non-coding RNAs (lncRNAs). Within the integrator complex, INTS13 is part of the integrator tail module and acts as a platform for the recruitment of transcription factors at promoters. At prophase, mediates recruitment of cytoplasmic dynein to the nuclear envelope, a step important for proper centrosome-nucleus coupling. At G2/M phase, may be required for proper spindle formation and execution of cytokinesis. The polypeptide is Integrator complex subunit 13 (Mus musculus (Mouse)).